The following is a 269-amino-acid chain: ParA family protein MG470 (269 aa).

The protein belongs to the ParA family.

This chain is ParA family protein MG470, found in Mycoplasma genitalium (strain ATCC 33530 / DSM 19775 / NCTC 10195 / G37) (Mycoplasmoides genitalium).